The sequence spans 178 residues: Inorganic pyrophosphatase (178 aa).

Positions 30, 44, and 56 each coordinate substrate. Residues aspartate 66, aspartate 71, and aspartate 103 each contribute to the Mg(2+) site. Tyrosine 142 lines the substrate pocket.

The protein belongs to the PPase family. As to quaternary structure, homohexamer. The cofactor is Mg(2+).

It is found in the cytoplasm. The catalysed reaction is diphosphate + H2O = 2 phosphate + H(+). Its function is as follows. Catalyzes the hydrolysis of inorganic pyrophosphate (PPi) forming two phosphate ions. This Xanthomonas campestris pv. campestris (strain ATCC 33913 / DSM 3586 / NCPPB 528 / LMG 568 / P 25) protein is Inorganic pyrophosphatase.